The following is a 1064-amino-acid chain: Importin-13 homolog A (1064 aa).

Positions 40-109 (ALPQIQQWLI…LDNLLLFLKT (70 aa)) constitute an Importin N-terminal domain. Disordered stretches follow at residues 695-722 (TTQQ…NNNN) and 839-860 (NNKK…NENN). Residues 700–722 (NNNNNNNNNNNNNNNNNNNNNNN) are compositionally biased toward low complexity.

Belongs to the importin beta family. In terms of assembly, forms a complex with an importin alpha subunit.

Its subcellular location is the cytoplasm. The protein resides in the nucleus envelope. In terms of biological role, required for nuclear protein import and mediates docking of import substrate to distinct nucleoporins. The protein is Importin-13 homolog A (ipo13A) of Dictyostelium discoideum (Social amoeba).